Consider the following 225-residue polypeptide: UPF0173 metal-dependent hydrolase Pars_0810 (225 aa).

The protein belongs to the UPF0173 family.

This Pyrobaculum arsenaticum (strain DSM 13514 / JCM 11321 / PZ6) protein is UPF0173 metal-dependent hydrolase Pars_0810.